A 147-amino-acid chain; its full sequence is ATP synthase epsilon chain 2 (147 aa).

The protein belongs to the ATPase epsilon chain family. As to quaternary structure, F-type ATPases have 2 components, CF(1) - the catalytic core - and CF(0) - the membrane proton channel. CF(1) has five subunits: alpha(3), beta(3), gamma(1), delta(1), epsilon(1). CF(0) has three main subunits: a, b and c.

It localises to the cell inner membrane. In terms of biological role, produces ATP from ADP in the presence of a proton gradient across the membrane. This chain is ATP synthase epsilon chain 2, found in Photobacterium profundum (strain SS9).